A 398-amino-acid polypeptide reads, in one-letter code: CCA-adding enzyme (398 aa).

Residues G32 and R35 each coordinate ATP. G32 and R35 together coordinate CTP. D45 and D47 together coordinate Mg(2+). Residues R116, D159, R162, R165, and R168 each coordinate ATP. Residues R116, D159, R162, R165, and R168 each contribute to the CTP site.

The protein belongs to the tRNA nucleotidyltransferase/poly(A) polymerase family. Bacterial CCA-adding enzyme type 3 subfamily. As to quaternary structure, homodimer. Requires Mg(2+) as cofactor.

It carries out the reaction a tRNA precursor + 2 CTP + ATP = a tRNA with a 3' CCA end + 3 diphosphate. The enzyme catalyses a tRNA with a 3' CCA end + 2 CTP + ATP = a tRNA with a 3' CCACCA end + 3 diphosphate. In terms of biological role, catalyzes the addition and repair of the essential 3'-terminal CCA sequence in tRNAs without using a nucleic acid template. Adds these three nucleotides in the order of C, C, and A to the tRNA nucleotide-73, using CTP and ATP as substrates and producing inorganic pyrophosphate. tRNA 3'-terminal CCA addition is required both for tRNA processing and repair. Also involved in tRNA surveillance by mediating tandem CCA addition to generate a CCACCA at the 3' terminus of unstable tRNAs. While stable tRNAs receive only 3'-terminal CCA, unstable tRNAs are marked with CCACCA and rapidly degraded. This Lacticaseibacillus paracasei (strain ATCC 334 / BCRC 17002 / CCUG 31169 / CIP 107868 / KCTC 3260 / NRRL B-441) (Lactobacillus paracasei) protein is CCA-adding enzyme.